Reading from the N-terminus, the 70-residue chain is uncharacterized protein (70 aa).

This is an uncharacterized protein from Dictyostelium discoideum (Social amoeba).